The sequence spans 131 residues: Small ribosomal subunit protein uS12c (131 aa).

Belongs to the universal ribosomal protein uS12 family. As to quaternary structure, part of the 30S ribosomal subunit.

It is found in the plastid. It localises to the chloroplast. In terms of biological role, with S4 and S5 plays an important role in translational accuracy. Located at the interface of the 30S and 50S subunits. The polypeptide is Small ribosomal subunit protein uS12c (rps12) (Stigeoclonium helveticum (Green alga)).